The following is a 751-amino-acid chain: Methionine--tRNA ligase, cytoplasmic (751 aa).

The residue at position 2 (serine 2) is an N-acetylserine. The interaction with ARC1 stretch occupies residues leucine 36–tyrosine 92. The short motif at proline 205 to asparagine 215 is the 'HIGH' region element. An ATP-binding site is contributed by lysine 411. The 'KMSKS' region signature appears at lysine 525–serine 529.

This sequence belongs to the class-I aminoacyl-tRNA synthetase family. In terms of assembly, component of a yeast aminoacyl-tRNA synthase (aaRS) complex formed by methionyl-tRNA synthase MES1, glutamyl-tRNA synthase GUS1 and the tRNA aminoacylation cofactor ARC1 in a stoichiometric complex. Interacts (via N-ter) with ARC1 (via N-ter). Can also form a stable binary complex with ARC1 that is functional in terms of aminoacylation. ARC1 increases the affinity for cognate tRNAs due to the presence of a tRNA binding domain in the middle and C-terminal part of ARC1.

The protein resides in the cytoplasm. The enzyme catalyses tRNA(Met) + L-methionine + ATP = L-methionyl-tRNA(Met) + AMP + diphosphate. Functionally, catalyzes the attachment of methionine to tRNA(Met) in a two-step reaction: methionine is first activated by ATP to form Met-AMP and then transferred to the acceptor end of tRNA(Met). In Saccharomyces cerevisiae (strain ATCC 204508 / S288c) (Baker's yeast), this protein is Methionine--tRNA ligase, cytoplasmic (MES1).